The sequence spans 284 residues: NAD kinase (284 aa).

Catalysis depends on D71, which acts as the Proton acceptor. NAD(+) is bound by residues 71–72, 144–145, D174, 185–190, and Q242; these read DG, ND, and TAYNLS.

It belongs to the NAD kinase family. A divalent metal cation is required as a cofactor.

It is found in the cytoplasm. The enzyme catalyses NAD(+) + ATP = ADP + NADP(+) + H(+). Its function is as follows. Involved in the regulation of the intracellular balance of NAD and NADP, and is a key enzyme in the biosynthesis of NADP. Catalyzes specifically the phosphorylation on 2'-hydroxyl of the adenosine moiety of NAD to yield NADP. This Sulfurimonas denitrificans (strain ATCC 33889 / DSM 1251) (Thiomicrospira denitrificans (strain ATCC 33889 / DSM 1251)) protein is NAD kinase.